We begin with the raw amino-acid sequence, 554 residues long: uncharacterized protein (554 aa).

This is an uncharacterized protein from Saccharomyces cerevisiae (strain ATCC 204508 / S288c) (Baker's yeast).